Consider the following 297-residue polypeptide: Large ribosomal subunit protein uL3 (297 aa).

Disordered stretches follow at residues 124–143 (NQKI…PVRQ) and 258–297 (MKEK…DKGE).

The protein belongs to the universal ribosomal protein uL3 family. As to quaternary structure, part of the 50S ribosomal subunit. Forms a cluster with proteins L14 and L19.

Its function is as follows. One of the primary rRNA binding proteins, it binds directly near the 3'-end of the 23S rRNA, where it nucleates assembly of the 50S subunit. The polypeptide is Large ribosomal subunit protein uL3 (Mycoplasma mobile (strain ATCC 43663 / 163K / NCTC 11711) (Mesomycoplasma mobile)).